An 827-amino-acid chain; its full sequence is Periplasmic nitrate reductase (827 aa).

Positions 1-32 (MNLSRRDFMKANAALAAASVAGLIIPVKNVNA) form a signal peptide, tat-type signal. The 4Fe-4S Mo/W bis-MGD-type domain occupies 37–93 (ITWDKAVCRFCGTGCAVLVGTKDGRVVASQGDPDAEVNRGLNCIKGYFLPKIMYGKD). Positions 44, 47, 51, and 79 each coordinate [4Fe-4S] cluster. Mo-bis(molybdopterin guanine dinucleotide) is bound by residues K81, Q148, N173, C177, 210-217 (WGSNMAEM), 242-246 (STFEH), 261-263 (QSD), M372, Q376, N482, 508-509 (SD), K531, D558, and 717-726 (TGRILEHWHT). Residue F793 participates in substrate binding. The Mo-bis(molybdopterin guanine dinucleotide) site is built by N801 and K818.

This sequence belongs to the prokaryotic molybdopterin-containing oxidoreductase family. NasA/NapA/NarB subfamily. Component of the periplasmic nitrate reductase NapAB complex composed of NapA and NapB. [4Fe-4S] cluster serves as cofactor. It depends on Mo-bis(molybdopterin guanine dinucleotide) as a cofactor. In terms of processing, predicted to be exported by the Tat system. The position of the signal peptide cleavage has not been experimentally proven.

The protein localises to the periplasm. The enzyme catalyses 2 Fe(II)-[cytochrome] + nitrate + 2 H(+) = 2 Fe(III)-[cytochrome] + nitrite + H2O. Its function is as follows. Catalytic subunit of the periplasmic nitrate reductase complex NapAB. Receives electrons from NapB and catalyzes the reduction of nitrate to nitrite. The chain is Periplasmic nitrate reductase from Histophilus somni (strain 2336) (Haemophilus somnus).